The primary structure comprises 155 residues: Ribosomal RNA large subunit methyltransferase H (155 aa).

Residues leucine 72, glycine 103, and phenylalanine 122–tryptophan 127 each bind S-adenosyl-L-methionine.

Belongs to the RNA methyltransferase RlmH family. Homodimer.

Its subcellular location is the cytoplasm. The catalysed reaction is pseudouridine(1915) in 23S rRNA + S-adenosyl-L-methionine = N(3)-methylpseudouridine(1915) in 23S rRNA + S-adenosyl-L-homocysteine + H(+). Functionally, specifically methylates the pseudouridine at position 1915 (m3Psi1915) in 23S rRNA. This Paracoccus denitrificans (strain Pd 1222) protein is Ribosomal RNA large subunit methyltransferase H.